The sequence spans 172 residues: Transcription factor MafF (172 aa).

The segment at 51-76 (RLKQRRRTLKNRGYAASCRVKRVCQK) is basic motif. The bZIP domain occupies 51–114 (RLKQRRRTLK…DALRGKCEAL (64 aa)). Residues 79–93 (LQKQKSELEREVDKL) are leucine-zipper. The disordered stretch occupies residues 140–172 (VKSAPSPGPGPAPGPGPASGPGPAPGPAPAACS). Pro residues predominate over residues 145-172 (SPGPGPAPGPGPASGPGPAPGPAPAACS).

Belongs to the bZIP family. Maf subfamily. In terms of assembly, monomer and homo- or heterodimer. Interacts with MIP. Forms high affinity heterodimers with members of the CNC-bZIP family such as NFE2L1/NRF1.

The protein resides in the nucleus. Since they lack a putative transactivation domain, the small Mafs behave as transcriptional repressors when they dimerize among themselves. However, they seem to serve as transcriptional activators by dimerizing with other (usually larger) basic-zipper proteins, such as NFE2L1/NRF1, and recruiting them to specific DNA-binding sites. Interacts with the upstream promoter region of the oxytocin receptor gene. May be a transcriptional enhancer in the up-regulation of the oxytocin receptor gene at parturition. This Bos taurus (Bovine) protein is Transcription factor MafF (MAFF).